The chain runs to 153 residues: Small ribosomal subunit protein uS13 (153 aa).

A disordered region spans residues 129 to 153 (RGQRTKSTFRHGSSVGVSRTRPTGN). The segment covering 143–153 (VGVSRTRPTGN) has biased composition (polar residues).

This sequence belongs to the universal ribosomal protein uS13 family. As to quaternary structure, part of the 30S ribosomal subunit. Forms a loose heterodimer with protein S19. Forms two bridges to the 50S subunit in the 70S ribosome.

Functionally, located at the top of the head of the 30S subunit, it contacts several helices of the 16S rRNA. In the 70S ribosome it contacts the 23S rRNA (bridge B1a) and protein L5 of the 50S subunit (bridge B1b), connecting the 2 subunits; these bridges are implicated in subunit movement. The protein is Small ribosomal subunit protein uS13 of Methanosphaera stadtmanae (strain ATCC 43021 / DSM 3091 / JCM 11832 / MCB-3).